Consider the following 60-residue polypeptide: Cytotoxin 2 (60 aa).

4 disulfide bridges follow: Cys3/Cys21, Cys14/Cys38, Cys42/Cys53, and Cys54/Cys59.

Belongs to the three-finger toxin family. Short-chain subfamily. Type IA cytotoxin sub-subfamily. Monomer in solution; Homodimer and oligomer in the presence of negatively charged lipids forming a pore with a size ranging between 20 and 30 Angstroms. As to expression, expressed by the venom gland.

It is found in the secreted. Its subcellular location is the target cell membrane. In terms of biological role, shows cytolytic activity on many different cells by forming pore in lipid membranes. In vivo, increases heart rate or kills the animal by cardiac arrest. In addition, it binds to heparin with high affinity, interacts with Kv channel-interacting protein 1 (KCNIP1) in a calcium-independent manner, and binds to integrin alpha-V/beta-3 (ITGAV/ITGB3) with moderate affinity. The protein is Cytotoxin 2 of Naja annulifera (Banded Egyptian cobra).